A 321-amino-acid chain; its full sequence is Fructose-1,6-bisphosphatase class 1 (321 aa).

Mg(2+) contacts are provided by E93, D114, L116, and D117. Residues 117-120, N205, Y233, and K263 each bind substrate; that span reads DGSS. E269 provides a ligand contact to Mg(2+).

It belongs to the FBPase class 1 family. Homotetramer. Mg(2+) serves as cofactor.

The protein resides in the cytoplasm. The catalysed reaction is beta-D-fructose 1,6-bisphosphate + H2O = beta-D-fructose 6-phosphate + phosphate. Its pathway is carbohydrate biosynthesis; gluconeogenesis. In Persephonella marina (strain DSM 14350 / EX-H1), this protein is Fructose-1,6-bisphosphatase class 1.